The chain runs to 262 residues: Nurim (262 aa).

The Nuclear portion of the chain corresponds to 1–4 (MAPA). Residues 5–28 (LLLVPAALASFILAFGTGVEFVRF) traverse the membrane as a helical segment. Over 29 to 58 (TSLRPLLGGIPESGGPDARQGWLAALQDRS) the chain is Perinuclear space. A helical transmembrane segment spans residues 59–80 (ILAPLAWDLGLLLLFVGQHSLM). The Nuclear segment spans residues 81–97 (AAERVKAWTSRYFGVLQ). The chain crosses the membrane as a helical span at residues 98–114 (RSLYVACTALALQLVMR). Topologically, residues 115 to 133 (YWEPIPKGPVLWEARAEPW) are perinuclear space. A helical transmembrane segment spans residues 134–164 (ATWVPLLCFVLHVISWLLIFSILLVFDYAEL). At 165-191 (MGLKQVYYHVLGLGEPLALKSPRALRL) the chain is on the nuclear side. Residues 192–210 (FSHLRHPVCVELLTVLWVV) form a helical membrane-spanning segment. Residues 211–216 (PTLGTD) are Perinuclear space-facing. Residues 217-234 (RLLLAFLLTLYLGLAHGL) form a helical membrane-spanning segment. The Nuclear segment spans residues 235–262 (DQQDLRYLRAQLQRKLHLLSRPQDGEAE).

It belongs to the nurim family.

Its subcellular location is the nucleus inner membrane. The polypeptide is Nurim (NRM) (Pan troglodytes (Chimpanzee)).